The chain runs to 153 residues: Pheromone-binding protein Gp-9 (153 aa).

Residues 1-19 form the signal peptide; that stretch reads MKTFVLHIFIFALVAFASA. Cystine bridges form between Cys37–Cys77, Cys73–Cys129, and Cys118–Cys138.

Belongs to the PBP/GOBP family. As to quaternary structure, homodimer.

It localises to the secreted. Colony queen number, a major feature of social organization, is associated with worker genotype for Gp-9. Colonies are headed by either a single reproductive queen (monogyne form) or multiple queens (polygyne form). Differences in worker Gp-9 genotypes between social forms may cause differences in workers' abilities to recognize queens and regulate their numbers. The polypeptide is Pheromone-binding protein Gp-9 (Solenopsis tridens (Fire ant)).